The sequence spans 99 residues: Large ribosomal subunit protein uL23 (99 aa).

This sequence belongs to the universal ribosomal protein uL23 family. Part of the 50S ribosomal subunit. Contacts protein L29, and trigger factor when it is bound to the ribosome.

Its function is as follows. One of the early assembly proteins it binds 23S rRNA. One of the proteins that surrounds the polypeptide exit tunnel on the outside of the ribosome. Forms the main docking site for trigger factor binding to the ribosome. The polypeptide is Large ribosomal subunit protein uL23 (Francisella tularensis subsp. tularensis (strain SCHU S4 / Schu 4)).